The sequence spans 491 residues: Proline--tRNA ligase (491 aa).

Belongs to the class-II aminoacyl-tRNA synthetase family. ProS type 3 subfamily. In terms of assembly, homodimer.

It is found in the cytoplasm. The enzyme catalyses tRNA(Pro) + L-proline + ATP = L-prolyl-tRNA(Pro) + AMP + diphosphate. Its function is as follows. Catalyzes the attachment of proline to tRNA(Pro) in a two-step reaction: proline is first activated by ATP to form Pro-AMP and then transferred to the acceptor end of tRNA(Pro). The polypeptide is Proline--tRNA ligase (Halorubrum lacusprofundi (strain ATCC 49239 / DSM 5036 / JCM 8891 / ACAM 34)).